We begin with the raw amino-acid sequence, 251 residues long: Octanoyltransferase (251 aa).

The BPL/LPL catalytic domain occupies Ala56 to Ser237. Residues Arg96–His103, Ala168–Gly170, and Gly181–Ser183 each bind substrate. The Acyl-thioester intermediate role is filled by Cys199.

This sequence belongs to the LipB family.

The protein localises to the cytoplasm. It carries out the reaction octanoyl-[ACP] + L-lysyl-[protein] = N(6)-octanoyl-L-lysyl-[protein] + holo-[ACP] + H(+). It functions in the pathway protein modification; protein lipoylation via endogenous pathway; protein N(6)-(lipoyl)lysine from octanoyl-[acyl-carrier-protein]: step 1/2. Functionally, catalyzes the transfer of endogenously produced octanoic acid from octanoyl-acyl-carrier-protein onto the lipoyl domains of lipoate-dependent enzymes. Lipoyl-ACP can also act as a substrate although octanoyl-ACP is likely to be the physiological substrate. This Burkholderia ambifaria (strain ATCC BAA-244 / DSM 16087 / CCUG 44356 / LMG 19182 / AMMD) (Burkholderia cepacia (strain AMMD)) protein is Octanoyltransferase.